The primary structure comprises 250 residues: tRNA (guanine-N(1)-)-methyltransferase (250 aa).

S-adenosyl-L-methionine is bound by residues G115 and 135–140; that span reads LGDFVL.

This sequence belongs to the RNA methyltransferase TrmD family. As to quaternary structure, homodimer.

The protein resides in the cytoplasm. The enzyme catalyses guanosine(37) in tRNA + S-adenosyl-L-methionine = N(1)-methylguanosine(37) in tRNA + S-adenosyl-L-homocysteine + H(+). In terms of biological role, specifically methylates guanosine-37 in various tRNAs. This Legionella pneumophila subsp. pneumophila (strain Philadelphia 1 / ATCC 33152 / DSM 7513) protein is tRNA (guanine-N(1)-)-methyltransferase.